Consider the following 153-residue polypeptide: Large ribosomal subunit protein uL30 (153 aa).

It belongs to the universal ribosomal protein uL30 family. Part of the 50S ribosomal subunit.

The polypeptide is Large ribosomal subunit protein uL30 (Methanocella arvoryzae (strain DSM 22066 / NBRC 105507 / MRE50)).